Consider the following 373-residue polypeptide: ATP-dependent 6-phosphofructokinase (373 aa).

Residues glycine 12, 74-75, and 110-113 each bind ATP; these read RD and GGGT. Residues 133-135, arginine 170, 177-179, glutamate 230, arginine 291, and 297-300 contribute to the substrate site; these read TID, MGH, and YVQR. Residue aspartate 135 is the Proton acceptor of the active site.

The protein belongs to the phosphofructokinase type A (PFKA) family. Mixed-substrate PFK group III subfamily. Homodimer or homotetramer. Mg(2+) is required as a cofactor.

It localises to the cytoplasm. It catalyses the reaction beta-D-fructose 6-phosphate + ATP = beta-D-fructose 1,6-bisphosphate + ADP + H(+). It functions in the pathway carbohydrate degradation; glycolysis; D-glyceraldehyde 3-phosphate and glycerone phosphate from D-glucose: step 3/4. Functionally, catalyzes the phosphorylation of D-fructose 6-phosphate to fructose 1,6-bisphosphate by ATP, the first committing step of glycolysis. The polypeptide is ATP-dependent 6-phosphofructokinase (Propionibacterium freudenreichii subsp. shermanii (strain ATCC 9614 / DSM 4902 / CIP 103027 / NCIMB 8099 / CIRM-BIA1)).